A 376-amino-acid polypeptide reads, in one-letter code: Heterodimeric geranylgeranyl pyrophosphate synthase large subunit 2 (376 aa).

A signal peptide spans 1 to 24; the sequence is MEPQILFLYLSLFILSLNFFFTNL. The isopentenyl diphosphate site is built by lysine 125, arginine 128, and histidine 157. Positions 164 and 170 each coordinate Mg(2+). A dimethylallyl diphosphate-binding site is contributed by arginine 175. Isopentenyl diphosphate is bound at residue arginine 176. The dimethylallyl diphosphate site is built by lysine 261, threonine 262, glutamine 299, lysine 316, and lysine 326.

This sequence belongs to the FPP/GGPP synthase family. In terms of assembly, monomer. Part of a heterodimeric geranyl(geranyl)diphosphate synthase. Interacts with GGR. Mg(2+) serves as cofactor. Mainly expressed in flowers.

The protein localises to the endoplasmic reticulum. It catalyses the reaction isopentenyl diphosphate + dimethylallyl diphosphate = (2E)-geranyl diphosphate + diphosphate. It carries out the reaction isopentenyl diphosphate + (2E)-geranyl diphosphate = (2E,6E)-farnesyl diphosphate + diphosphate. The catalysed reaction is isopentenyl diphosphate + (2E,6E)-farnesyl diphosphate = (2E,6E,10E)-geranylgeranyl diphosphate + diphosphate. It participates in isoprenoid biosynthesis; farnesyl diphosphate biosynthesis; farnesyl diphosphate from geranyl diphosphate and isopentenyl diphosphate: step 1/1. The protein operates within isoprenoid biosynthesis; geranyl diphosphate biosynthesis; geranyl diphosphate from dimethylallyl diphosphate and isopentenyl diphosphate: step 1/1. It functions in the pathway isoprenoid biosynthesis; geranylgeranyl diphosphate biosynthesis; geranylgeranyl diphosphate from farnesyl diphosphate and isopentenyl diphosphate: step 1/1. Its function is as follows. Heterodimeric geranyl(geranyl)-diphosphate (GPP) synthase large subunit. In vitro, the large subunit catalyzes mainly the trans-addition of the three molecules of IPP onto DMAPP to form geranylgeranyl pyrophosphate while the small subunit alone is inactive. Upon association of the two subunits, the product profile is not changed. The polypeptide is Heterodimeric geranylgeranyl pyrophosphate synthase large subunit 2 (GGPPS2) (Arabidopsis thaliana (Mouse-ear cress)).